We begin with the raw amino-acid sequence, 256 residues long: Type III pantothenate kinase (256 aa).

Residue 6–13 (DIGNTHTV) coordinates ATP. Substrate is bound by residues Tyr100 and 107–110 (GADR). Asp109 (proton acceptor) is an active-site residue. Residue Asp129 coordinates K(+). Residue Thr132 coordinates ATP. Thr184 is a substrate binding site.

The protein belongs to the type III pantothenate kinase family. In terms of assembly, homodimer. Requires NH4(+) as cofactor. K(+) serves as cofactor.

It localises to the cytoplasm. The catalysed reaction is (R)-pantothenate + ATP = (R)-4'-phosphopantothenate + ADP + H(+). Its pathway is cofactor biosynthesis; coenzyme A biosynthesis; CoA from (R)-pantothenate: step 1/5. Functionally, catalyzes the phosphorylation of pantothenate (Pan), the first step in CoA biosynthesis. This chain is Type III pantothenate kinase, found in Acidothermus cellulolyticus (strain ATCC 43068 / DSM 8971 / 11B).